Here is a 153-residue protein sequence, read N- to C-terminus: MRELAGSPGTWSGLSLRVGQLVFAAASVCATASALGFAAYTAFCYLIASMGLQALWSLGLACLDCYALKFKKDLHSAVLLSLFVVGDWVTAILSFAASCSAAGVVVLFDRDIYACRNPQLPCGRFELAIACAFLSWAFSATSALVMFWLLASL.

Topologically, residues Met1–Gln20 are cytoplasmic. The chain crosses the membrane as a helical span at residues Leu21 to Thr41. Residue Ala42 is a topological domain, extracellular. The helical transmembrane segment at Phe43 to Leu63 threads the bilayer. At Asp64–Ser76 the chain is on the cytoplasmic side. Residues Ala77–Ala97 traverse the membrane as a helical segment. Topologically, residues Ser98 to Ala128 are extracellular. A helical membrane pass occupies residues Ile129–Leu149. Residues Leu150–Leu153 are Cytoplasmic-facing.

This sequence belongs to the Casparian strip membrane proteins (CASP) family. As to quaternary structure, homodimer and heterodimers.

The protein localises to the cell membrane. In Oryza sativa subsp. indica (Rice), this protein is CASP-like protein 5B1.